A 127-amino-acid polypeptide reads, in one-letter code: Movement protein TGB2 (127 aa).

The Cytoplasmic segment spans residues 1–24 (MSLSHGTGAPAISTPLTLRPPPDN). The chain crosses the membrane as a helical span at residues 25–45 (TKAILTIAIGIAASLVFFMLT). Residues 46-85 (RNNLPHVGDNIHSLPHGGSYIDGTKSINYRPPASRYPSSN) are Lumenal-facing. A helical membrane pass occupies residues 86 to 106 (LLAFAPPILAAVLFFLTQPYL). The Cytoplasmic segment spans residues 107–127 (ATRRSRCVRCFVVHGACTNHT).

It belongs to the Tymovirales TGBp2 protein family.

The protein resides in the host endoplasmic reticulum membrane. Its function is as follows. Plays a role in viral cell-to-cell propagation, by facilitating genome transport to neighboring plant cells through plasmosdesmata,. This Setaria italica (Foxtail millet) protein is Movement protein TGB2.